The chain runs to 911 residues: DNA ligase 4 (911 aa).

The ATP site is built by Glu-271, Thr-272, Lys-273, Leu-274, Arg-278, Glu-331, Lys-345, Phe-367, Glu-427, Lys-432, Lys-449, and Lys-451. Residue Lys-273 is the N6-AMP-lysine intermediate of the active site. Position 331 (Glu-331) interacts with Mg(2+). Glu-427 is a Mg(2+) binding site. Positions 610-620 (LASKHFYVGGD) are required for catalytic activity. 2 consecutive BRCT domains span residues 654–743 (KISN…PHFM) and 808–911 (SPLS…QYLI).

The protein belongs to the ATP-dependent DNA ligase family. In terms of assembly, interacts with XRCC4; the LIG4-XRCC4 subcomplex has a 1:2 stoichiometry and XRCC4 is required for LIG4 stability. Component of the core long-range non-homologous end joining (NHEJ) complex (also named DNA-PK complex) composed of PRKDC, LIG4, XRCC4, XRCC6/Ku70, XRCC5/Ku86 and NHEJ1/XLF. Additional component of the NHEJ complex includes PAXX. Following autophosphorylation, PRKDC dissociates from DNA, leading to formation of the short-range NHEJ complex, composed of LIG4, XRCC4, XRCC6/Ku70, XRCC5/Ku86 and NHEJ1/XLF. Interacts with DCLRE1C; the interaction is direct. Interacts with APLF. The cofactor is Mg(2+).

It is found in the nucleus. It carries out the reaction ATP + (deoxyribonucleotide)n-3'-hydroxyl + 5'-phospho-(deoxyribonucleotide)m = (deoxyribonucleotide)n+m + AMP + diphosphate.. Functionally, DNA ligase involved in DNA non-homologous end joining (NHEJ); required for double-strand break (DSB) repair and V(D)J recombination. Catalyzes the NHEJ ligation step of the broken DNA during DSB repair by resealing the DNA breaks after the gap filling is completed. Joins single-strand breaks in a double-stranded polydeoxynucleotide in an ATP-dependent reaction. LIG4 is mechanistically flexible: it can ligate nicks as well as compatible DNA overhangs alone, while in the presence of XRCC4, it can ligate ends with 2-nucleotides (nt) microhomology and 1-nt gaps. Forms a subcomplex with XRCC4; the LIG4-XRCC4 subcomplex is responsible for the NHEJ ligation step and XRCC4 enhances the joining activity of LIG4. Binding of the LIG4-XRCC4 complex to DNA ends is dependent on the assembly of the DNA-dependent protein kinase complex DNA-PK to these DNA ends. LIG4 regulates nuclear localization of XRCC4. This is DNA ligase 4 from Pongo abelii (Sumatran orangutan).